Reading from the N-terminus, the 152-residue chain is Anaerobic nitrite reductase SYMA (152 aa).

In terms of domain architecture, Globin spans 2–151 (ALTERQEALL…LVATIKAEMK (150 aa)). Residues 35–39 (EAAPE) carry the Homodimerization motif. Positions 45, 59, 63, 93, and 98 each coordinate heme b. The Homodimerization signature appears at 105 to 117 (DPHFEVMKGALLG).

This sequence belongs to the plant globin family. Homodimer. Requires heme b as cofactor. In terms of tissue distribution, root nodules.

It is found in the cytoplasm. It localises to the nucleus. It carries out the reaction Fe(III)-heme b-[protein] + nitric oxide + H2O = Fe(II)-heme b-[protein] + nitrite + 2 H(+). Functionally, phytoglobin that reduces nitrite to nitric oxide (NO) under anoxic conditions (e.g. during flooding or in waterlogged soil) and upon root nodulation. Required for general plant development and during nodulation, especially for the onset of symbiosis. Monitors nitric oxide (NO) levels during early phase of the nitrogen-fixing symbiosis and buffers oxygen in functioning nodules. May not function as an oxygen storage or transport protein. Has an unusually high affinity for O(2) through a hexacoordinate heme iron because of a very low dissociation constant. The chain is Anaerobic nitrite reductase SYMA from Casuarina glauca (Swamp oak).